Here is a 64-residue protein sequence, read N- to C-terminus: Translation machinery-associated protein 7 homolog (64 aa).

The interval 1–64 (MSGRQGGKAK…GGGIKKSGKK (64 aa)) is disordered. A coiled-coil region spans residues 21-50 (DLSEEDVEFKKKQQEEAKKIKEMAAKAGQR). The span at 28–44 (EFKKKQQEEAKKIKEMA) shows a compositional bias: basic and acidic residues. Residues 53–64 (LLGGGIKKSGKK) show a composition bias toward gly residues.

It belongs to the TMA7 family.

The protein is Translation machinery-associated protein 7 homolog of Caenorhabditis elegans.